Here is a 92-residue protein sequence, read N- to C-terminus: Putative transcription elongation factor S-II-like protein 81R (92 aa).

The TFIIS-type zinc-finger motif lies at 51–91 (GTVKCPGCGSRRVHALQRQTRSADEPMTLFAMCSECGKRWT). Positions 55, 58, 83, and 86 each coordinate Zn(2+).

The sequence is that of Putative transcription elongation factor S-II-like protein 81R from Dryophytes versicolor (chameleon treefrog).